A 440-amino-acid polypeptide reads, in one-letter code: Tol-Pal system protein TolB (440 aa).

The N-terminal stretch at 1–28 (MVMTRRIFFSWFIVICSLWLSSFSSVHA) is a signal peptide. The segment at 417–440 (RNERQLPTPNDASDPAWSPLLNMQ) is disordered.

The protein belongs to the TolB family. The Tol-Pal system is composed of five core proteins: the inner membrane proteins TolA, TolQ and TolR, the periplasmic protein TolB and the outer membrane protein Pal. They form a network linking the inner and outer membranes and the peptidoglycan layer.

The protein resides in the periplasm. Functionally, part of the Tol-Pal system, which plays a role in outer membrane invagination during cell division and is important for maintaining outer membrane integrity. This Bartonella quintana (strain Toulouse) (Rochalimaea quintana) protein is Tol-Pal system protein TolB.